The following is a 359-amino-acid chain: Methyltransferase fsa4 (359 aa).

S-adenosyl-L-methionine is bound by residues 198-199 (GG), aspartate 224, 248-249 (SF), arginine 264, and arginine 265.

Belongs to the class I-like SAM-binding methyltransferase superfamily. Cation-independent O-methyltransferase family.

It participates in mycotoxin biosynthesis. Functionally, methyltransferase; part of the gene cluster that mediates the biosynthesis of HIV-1 integrase inhibitor equisetin and of fusarisetin A, both trans-fused decalin-containing tetramic acids showing also antimicrobial activity. The PKS module of fsa1 together with the enoylreductase fsa3 catalyze the formation of the polyketide unit which is then conjugated to L-serine by the condensation domain of the fsa1 NRPS module. Activity of the Dieckmann cyclase domain (RED) results in release of the Dieckmann product intermediate. Diels-Alderase fsa2 is involved in endo-selective Diels-Alder cycloaddition to form the decalin ring, leading to the production of N-desmethylequisetin also called trichosetin. Subsequent N-methylation is carried out by fsa4 to give equisetin. The enzymatic gene responsible for the conversion of equisetin to fusarisetin A has not been identified yet and is probably located outside of the fsa cluster. The polypeptide is Methyltransferase fsa4 (Fusarium sp. (strain FN080326)).